A 204-amino-acid chain; its full sequence is Phosphopantothenoylcysteine decarboxylase (204 aa).

Residues Thr-53 and 104-107 (DANT) each bind FMN. Asn-140 is a binding site for substrate. Cys-173 acts as the Proton donor in catalysis.

The protein belongs to the HFCD (homooligomeric flavin containing Cys decarboxylase) superfamily. As to quaternary structure, homotrimer. FMN is required as a cofactor.

It catalyses the reaction N-[(R)-4-phosphopantothenoyl]-L-cysteine + H(+) = (R)-4'-phosphopantetheine + CO2. Its pathway is cofactor biosynthesis; coenzyme A biosynthesis; CoA from (R)-pantothenate: step 3/5. Functionally, catalyzes the decarboxylation of the cysteine moiety of 4-phosphopantothenoylcysteine to form 4'-phosphopantotheine and this reaction forms part of the biosynthesis of coenzyme A. This chain is Phosphopantothenoylcysteine decarboxylase (Ppcdc), found in Mus musculus (Mouse).